Reading from the N-terminus, the 338-residue chain is DNA-directed RNA polymerase subunit alpha (338 aa).

The interval 1–225 (MLISQRPTIT…ELFGLARELN (225 aa)) is alpha N-terminal domain (alpha-NTD). Positions 240–338 (TEYIAAYSMP…YIDVEAEDSE (99 aa)) are alpha C-terminal domain (alpha-CTD). Positions 319-338 (LEGYDAETGGYIDVEAEDSE) are disordered.

The protein belongs to the RNA polymerase alpha chain family. As to quaternary structure, homodimer. The RNAP catalytic core consists of 2 alpha, 1 beta, 1 beta' and 1 omega subunit. When a sigma factor is associated with the core the holoenzyme is formed, which can initiate transcription.

It catalyses the reaction RNA(n) + a ribonucleoside 5'-triphosphate = RNA(n+1) + diphosphate. Functionally, DNA-dependent RNA polymerase catalyzes the transcription of DNA into RNA using the four ribonucleoside triphosphates as substrates. The protein is DNA-directed RNA polymerase subunit alpha of Corynebacterium glutamicum (strain R).